Consider the following 586-residue polypeptide: Arginine--tRNA ligase (586 aa).

The short motif at 133 to 143 (ANPTGPLNIVS) is the 'HIGH' region element.

Belongs to the class-I aminoacyl-tRNA synthetase family. As to quaternary structure, monomer.

The protein localises to the cytoplasm. It carries out the reaction tRNA(Arg) + L-arginine + ATP = L-arginyl-tRNA(Arg) + AMP + diphosphate. This Leptospira interrogans serogroup Icterohaemorrhagiae serovar copenhageni (strain Fiocruz L1-130) protein is Arginine--tRNA ligase.